Consider the following 152-residue polypeptide: Large ribosomal subunit protein uL15 (152 aa).

A disordered region spans residues 1–55; that stretch reads MRLHELKPNEGATHKKKRVGRGIGSGHGKTSTKGQKGQTSRSGDSKLPARFEGGQ. Residues 28–42 show a composition bias toward polar residues; sequence GKTSTKGQKGQTSRS.

It belongs to the universal ribosomal protein uL15 family. Part of the 50S ribosomal subunit.

In terms of biological role, binds to the 23S rRNA. This Sulfurihydrogenibium sp. (strain YO3AOP1) protein is Large ribosomal subunit protein uL15.